Consider the following 1616-residue polypeptide: Putative inactive phenolphthiocerol synthesis polyketide synthase type I Pks1 (1616 aa).

An acyltransferase region spans residues 83-397 (TVVVFPGQGA…GQVFTTGVPV (315 aa)). S174 acts as the For acyltransferase activity in catalysis. The N-terminal hotdog fold stretch occupies residues 445–567 (HALLGAVVER…GMLGVAAAET (123 aa)). The interval 445–605 (HALLGAVVER…YAYGPAFQGL (161 aa)) is dehydratase. Positions 445–719 (HALLGAVVER…TRPITAEQLR (275 aa)) constitute a PKS/mFAS DH domain. The active-site Proton acceptor; for dehydratase activity is H477. The segment at 579–719 (AESVDISDGY…TRPITAEQLR (141 aa)) is C-terminal hotdog fold. The active-site Proton donor; for dehydratase activity is D640. The enoylreductase stretch occupies residues 910-1215 (GTLEDLVIQP…QARHIGKVVL (306 aa)). Residues 1040-1057 (VLIH…VQLA) and 1229-1244 (TVVI…GVLA) each bind NADP(+). A beta-ketoacyl reductase region spans residues 1228-1409 (GTVVITGATG…SLAWGLWEQP (182 aa)). Positions 1514 to 1589 (ELLVGLVCLQ…AVAEYVAQQM (76 aa)) constitute a Carrier domain. S1549 is modified (O-(pantetheine 4'-phosphoryl)serine). The span at 1588–1604 (QMSGSRPTESGDPTSQV) shows a compositional bias: polar residues. The interval 1588–1616 (QMSGSRPTESGDPTSQVVEPAAAEVSVHA) is disordered.

Pantetheine 4'-phosphate is required as a cofactor.

The protein operates within lipid metabolism; fatty acid biosynthesis. In terms of biological role, may play a role in phthiocerol biosynthesis. The polypeptide is Putative inactive phenolphthiocerol synthesis polyketide synthase type I Pks1 (pks1) (Mycobacterium tuberculosis (strain ATCC 25618 / H37Rv)).